The primary structure comprises 186 residues: Ribosome maturation factor RimP (186 aa).

Belongs to the RimP family.

The protein resides in the cytoplasm. In terms of biological role, required for maturation of 30S ribosomal subunits. The polypeptide is Ribosome maturation factor RimP (Novosphingobium aromaticivorans (strain ATCC 700278 / DSM 12444 / CCUG 56034 / CIP 105152 / NBRC 16084 / F199)).